The sequence spans 273 residues: Protein INAPERTURATE POLLEN1 (273 aa).

The DOG1 domain occupies 12 to 267 (SRRFNDFYED…KDQILLQDFE (256 aa)).

As to expression, expressed only in anthers and in pollen. Not detected in other flower tissues, stems, leaves and siliques.

The protein resides in the cytoplasm. Its function is as follows. Required for the formation of pollen surface apertures, which arise by restriction of exine deposition at specific sites. The aperture length depends on the INP1 dosage. Does not play a role in specifying the number or position of apertures. Acts in a sporophytic manner. This Arabidopsis thaliana (Mouse-ear cress) protein is Protein INAPERTURATE POLLEN1.